The chain runs to 375 residues: G-protein coupled estrogen receptor 1 (375 aa).

Met1 is modified (N-acetylmethionine). At 1–62 the chain is on the extracellular side; it reads MDVTSQARGV…QQYVIGLFLS (62 aa). Residues Asn25, Asn32, and Asn44 are each glycosylated (N-linked (GlcNAc...) asparagine). The helical transmembrane segment at 63–84 threads the bilayer; the sequence is CLYTIFLFPIGFVGNILILVVN. Residues 85–96 lie on the Cytoplasmic side of the membrane; that stretch reads ISFREKMTIPDL. Residues 97-120 traverse the membrane as a helical segment; it reads YFINLAVADLILVADSLIEVFNLH. Residues 121 to 132 are Extracellular-facing; that stretch reads ERYYDIAVLCTF. Residues Cys130 and Cys207 are joined by a disulfide bond. Residues 133–153 form a helical membrane-spanning segment; that stretch reads MSLFLQVNMYSSVFFLTWMSF. Residues 154–175 are Cytoplasmic-facing; that stretch reads DRYIALARAMRCSLFRTKHHAR. A helical membrane pass occupies residues 176–194; it reads LSCGLIWMASVSATLVPFT. Topologically, residues 195 to 220 are extracellular; sequence AVHLQHTDEACFCFADVREVQWLEVT. A helical membrane pass occupies residues 221-236; it reads LGFIVPFAIIGLCYSL. At 237-259 the chain is on the cytoplasmic side; it reads IVRVLVRAHRHRGLRPRRQKALR. Residues 260–280 traverse the membrane as a helical segment; it reads MILAVVLVFFVCWLPENVFIS. The Extracellular portion of the chain corresponds to 281 to 306; sequence VHLLQRTQPGAAPCKQSFRHAHPLTG. A helical membrane pass occupies residues 307–327; sequence HIVNLAAFSNSCLNPLIYSFL. At 328-375 the chain is on the cytoplasmic side; that stretch reads GETFRDKLRLYIEQKTNLPALNRFCHAALKAVIPDSTEQSDVRFSSAV.

It belongs to the G-protein coupled receptor 1 family. In terms of assembly, homodimer. Heterodimer; heterodimerizes with other G-protein-coupled receptor (GPCRs) like CRHR1, HTR1A and PAQR8. Interacts (via C-terminus tail motif) with DLG4 (via N-terminus tandem pair of PDZ domains); the interaction is direct and induces the increase of GPER1 protein levels residing at the plasma membrane surface in a estradiol-independent manner. Interacts with RAMP3; the interaction confers proper subcellular localization and function in cardioprotection. Interacts with KRT7 and KRT8. Interacts with EGFR; the interaction increases after agonist-induced stimulation in cancer-associated fibroblasts (CAF). Interacts with EGFR and ESR1. Ubiquitinated; ubiquitination occurs at the plasma membrane and leads to proteasome-mediated degradation. In terms of processing, glycosylated. Expressed in placenta, endothelial and epithelial cells, non laboring and laboring term myometrium, fibroblasts and cancer-associated fibroblasts (CAF), prostate cancer cells and invasive adenocarcinoma (at protein level). Ubiquitously expressed, but is most abundant in placenta. In brain regions, expressed as a 2.8 kb transcript in basal forebrain, frontal cortex, thalamus, hippocampus, caudate and putamen.

The protein localises to the nucleus. Its subcellular location is the cytoplasm. It is found in the perinuclear region. It localises to the cytoskeleton. The protein resides in the cell membrane. The protein localises to the basolateral cell membrane. Its subcellular location is the cytoplasmic vesicle membrane. It is found in the early endosome. It localises to the recycling endosome. The protein resides in the golgi apparatus membrane. The protein localises to the golgi apparatus. Its subcellular location is the trans-Golgi network. It is found in the endoplasmic reticulum membrane. It localises to the cell projection. The protein resides in the dendrite. The protein localises to the dendritic spine membrane. Its subcellular location is the axon. It is found in the postsynaptic density. It localises to the mitochondrion membrane. Its function is as follows. G-protein coupled estrogen receptor that binds to 17-beta-estradiol (E2) with high affinity, leading to rapid and transient activation of numerous intracellular signaling pathways. Stimulates cAMP production, calcium mobilization and tyrosine kinase Src inducing the release of heparin-bound epidermal growth factor (HB-EGF) and subsequent transactivation of the epidermal growth factor receptor (EGFR), activating downstream signaling pathways such as PI3K/Akt and ERK/MAPK. Mediates pleiotropic functions among others in the cardiovascular, endocrine, reproductive, immune and central nervous systems. Has a role in cardioprotection by reducing cardiac hypertrophy and perivascular fibrosis in a RAMP3-dependent manner. Regulates arterial blood pressure by stimulating vasodilation and reducing vascular smooth muscle and microvascular endothelial cell proliferation. Plays a role in blood glucose homeostasis contributing to the insulin secretion response by pancreatic beta cells. Triggers mitochondrial apoptosis during pachytene spermatocyte differentiation. Stimulates uterine epithelial cell proliferation. Enhances uterine contractility in response to oxytocin. Contributes to thymic atrophy by inducing apoptosis. Attenuates TNF-mediated endothelial expression of leukocyte adhesion molecules. Promotes neuritogenesis in developing hippocampal neurons. Plays a role in acute neuroprotection against NMDA-induced excitotoxic neuronal death. Increases firing activity and intracellular calcium oscillations in luteinizing hormone-releasing hormone (LHRH) neurons. Inhibits early osteoblast proliferation at growth plate during skeletal development. Inhibits mature adipocyte differentiation and lipid accumulation. Involved in the recruitment of beta-arrestin 2 ARRB2 at the plasma membrane in epithelial cells. Also functions as a receptor for aldosterone mediating rapid regulation of vascular contractibility through the PI3K/ERK signaling pathway. Involved in cancer progression regulation. Stimulates cancer-associated fibroblast (CAF) proliferation by a rapid genomic response through the EGFR/ERK transduction pathway. Associated with EGFR, may act as a transcription factor activating growth regulatory genes (c-fos, cyclin D1). Promotes integrin alpha-5/beta-1 and fibronectin (FN) matrix assembly in breast cancer cells. This Homo sapiens (Human) protein is G-protein coupled estrogen receptor 1.